Here is a 348-residue protein sequence, read N- to C-terminus: MSEEIIRLVNVTKEYDGVQVLDNINLYILRNEFITLLGPSGCGKTTTLRIIGGFENVTGGDILFEGKKINDVPPYKRKVNTVFQQYALFPHMNVFENIAFGLRIKKVDNKAIYAKVLQVMELMNLKGFEKRNIDSLSGGQRQRVAIARAIVNEPEVLLLDEPLAALDLKLRKEMQLELKRIQQRLGITFIFVTHDQEEALTMSDTVVVMNEGKIQQIGSPIDIYNEPKNVFVADFIGESNILDGVMLQDFLVHFHGRRFDCLDKGFSANEEVDVVIRPEDLKLVAAEEGMLTGEVQSVVFKGVHYEMMIQSSEFCWMVHSTQMEEVGNEVGLRILPNDIHIMKKVKGD.

An ABC transporter domain is found at 6–236 (IRLVNVTKEY…PKNVFVADFI (231 aa)). 38-45 (GPSGCGKT) lines the ATP pocket.

The protein belongs to the ABC transporter superfamily. Spermidine/putrescine importer (TC 3.A.1.11.1) family. In terms of assembly, the complex is composed of two ATP-binding proteins (PotA), two transmembrane proteins (PotB and PotC) and a solute-binding protein (PotD).

It localises to the cell membrane. It carries out the reaction ATP + H2O + polyamine-[polyamine-binding protein]Side 1 = ADP + phosphate + polyamineSide 2 + [polyamine-binding protein]Side 1.. Its function is as follows. Part of the ABC transporter complex PotABCD involved in spermidine/putrescine import. Responsible for energy coupling to the transport system. The protein is Spermidine/putrescine import ATP-binding protein PotA of Desulfitobacterium hafniense (strain Y51).